The sequence spans 394 residues: Cell division protein FtsZ (394 aa).

GTP contacts are provided by residues 21 to 25 (GGGGN), 108 to 110 (GTG), Glu139, Arg143, and Asp187.

The protein belongs to the FtsZ family. Homodimer. Polymerizes to form a dynamic ring structure in a strictly GTP-dependent manner. Interacts directly with several other division proteins.

The protein resides in the cytoplasm. Functionally, essential cell division protein that forms a contractile ring structure (Z ring) at the future cell division site. The regulation of the ring assembly controls the timing and the location of cell division. One of the functions of the FtsZ ring is to recruit other cell division proteins to the septum to produce a new cell wall between the dividing cells. Binds GTP and shows GTPase activity. The chain is Cell division protein FtsZ from Azotobacter vinelandii.